A 203-amino-acid chain; its full sequence is Pyridoxal 5'-phosphate synthase subunit PdxT (203 aa).

54–56 is an L-glutamine binding site; it reads GES. Cys86 (nucleophile) is an active-site residue. Residues Arg113 and 141–142 each bind L-glutamine; that span reads IR. Residues His177 and Glu179 each act as charge relay system in the active site.

It belongs to the glutaminase PdxT/SNO family. In terms of assembly, in the presence of PdxS, forms a dodecamer of heterodimers. Only shows activity in the heterodimer.

The catalysed reaction is aldehydo-D-ribose 5-phosphate + D-glyceraldehyde 3-phosphate + L-glutamine = pyridoxal 5'-phosphate + L-glutamate + phosphate + 3 H2O + H(+). It carries out the reaction L-glutamine + H2O = L-glutamate + NH4(+). The protein operates within cofactor biosynthesis; pyridoxal 5'-phosphate biosynthesis. In terms of biological role, catalyzes the hydrolysis of glutamine to glutamate and ammonia as part of the biosynthesis of pyridoxal 5'-phosphate. The resulting ammonia molecule is channeled to the active site of PdxS. This chain is Pyridoxal 5'-phosphate synthase subunit PdxT, found in Halobacterium salinarum (strain ATCC 29341 / DSM 671 / R1).